The primary structure comprises 33 residues: Mu-theraphotoxin-Osp1a (33 aa).

3 disulfides stabilise this stretch: cysteine 2/cysteine 17, cysteine 9/cysteine 22, and cysteine 16/cysteine 29.

The protein belongs to the neurotoxin 10 (Hwtx-1) family. Expressed by the venom gland.

The protein localises to the secreted. In terms of biological role, voltage-gated sodium channel Nav1.7/SCN9A inhibitor. The protein is Mu-theraphotoxin-Osp1a of Orphnaecus sp. (strain Sibaliw/Philippines) (Tarantula spider).